The primary structure comprises 510 residues: Beta-glucosidase 12 (510 aa).

Positions 1–24 (MAAAGAMPGGLLLTFLLLAVVASG) are cleaved as a signal peptide. Q53 lines the a beta-D-glucoside pocket. N-linked (GlcNAc...) asparagine glycosylation is present at N122. Residues H157 and 202–203 (NE) each bind a beta-D-glucoside. E203 serves as the catalytic Proton donor. 2 disulfides stabilise this stretch: C208–C243 and C222–C230. N-linked (GlcNAc...) asparagine glycosylation occurs at N229. Y346 is an a beta-D-glucoside binding site. Residues N361 and N371 are each glycosylated (N-linked (GlcNAc...) asparagine). A beta-D-glucoside is bound at residue E417. The active-site Nucleophile is E417. N-linked (GlcNAc...) asparagine glycosylation is present at N425. Residues W466, 473–474 (EW), and F482 contribute to the a beta-D-glucoside site.

It belongs to the glycosyl hydrolase 1 family.

The protein localises to the secreted. It catalyses the reaction Hydrolysis of terminal, non-reducing beta-D-glucosyl residues with release of beta-D-glucose.. Hydrolyzes p-nitrophenyl beta-D-glucoside, p-nitrophenyl beta-D-galactoside, p-nitrophenyl beta-D-xyloside, p-nitrophenyl beta-D-fucoside, p-nitrophenyl beta-L-arabinoside, cello-oligosaccharides and laminaribiose. In Oryza sativa subsp. indica (Rice), this protein is Beta-glucosidase 12.